We begin with the raw amino-acid sequence, 178 residues long: Small ribosomal subunit protein uS5 (178 aa).

Residues 15 to 78 (FEEKIIEIRR…ADAKKNVIEV (64 aa)) form the S5 DRBM domain.

It belongs to the universal ribosomal protein uS5 family. As to quaternary structure, part of the 30S ribosomal subunit. Contacts proteins S4 and S8.

Its function is as follows. With S4 and S12 plays an important role in translational accuracy. Functionally, located at the back of the 30S subunit body where it stabilizes the conformation of the head with respect to the body. The protein is Small ribosomal subunit protein uS5 of Thermotoga neapolitana (strain ATCC 49049 / DSM 4359 / NBRC 107923 / NS-E).